Consider the following 572-residue polypeptide: Sulfite reductase [NADPH] hemoprotein beta-component (572 aa).

[4Fe-4S] cluster is bound by residues C437, C443, C482, and C486. C486 contributes to the siroheme binding site.

The protein belongs to the nitrite and sulfite reductase 4Fe-4S domain family. Alpha(8)-beta(8). The alpha component is a flavoprotein, the beta component is a hemoprotein. Siroheme is required as a cofactor. It depends on [4Fe-4S] cluster as a cofactor.

It catalyses the reaction hydrogen sulfide + 3 NADP(+) + 3 H2O = sulfite + 3 NADPH + 4 H(+). It participates in sulfur metabolism; hydrogen sulfide biosynthesis; hydrogen sulfide from sulfite (NADPH route): step 1/1. In terms of biological role, component of the sulfite reductase complex that catalyzes the 6-electron reduction of sulfite to sulfide. This is one of several activities required for the biosynthesis of L-cysteine from sulfate. This is Sulfite reductase [NADPH] hemoprotein beta-component from Bacillus licheniformis (strain ATCC 14580 / DSM 13 / JCM 2505 / CCUG 7422 / NBRC 12200 / NCIMB 9375 / NCTC 10341 / NRRL NRS-1264 / Gibson 46).